We begin with the raw amino-acid sequence, 232 residues long: Venom allergen 5 (232 aa).

A signal peptide spans 1 to 23; sequence MEQIKYLLIGIIFSSAISSSLQC. Disulfide bonds link Cys28-Cys43, Cys54-Cys119, and Cys198-Cys215. An SCP domain is found at 71 to 217; it reads LQLHNELRAK…FYTTMVACNY (147 aa).

The protein belongs to the CRISP family. Venom allergen 5-like subfamily. In terms of tissue distribution, expressed by the venom gland.

It localises to the secreted. The polypeptide is Venom allergen 5 (Microctonus hyperodae (Parasitoid wasp)).